Here is a 450-residue protein sequence, read N- to C-terminus: Phosphoglucosamine mutase (450 aa).

Ser-101 serves as the catalytic Phosphoserine intermediate. Ser-101, Asp-242, Asp-244, and Asp-246 together coordinate Mg(2+). Phosphoserine is present on Ser-101.

Belongs to the phosphohexose mutase family. Mg(2+) is required as a cofactor. Activated by phosphorylation.

It carries out the reaction alpha-D-glucosamine 1-phosphate = D-glucosamine 6-phosphate. Catalyzes the conversion of glucosamine-6-phosphate to glucosamine-1-phosphate. The chain is Phosphoglucosamine mutase from Rhodopseudomonas palustris (strain HaA2).